Here is a 343-residue protein sequence, read N- to C-terminus: Protease HtpX homolog (343 aa).

2 consecutive transmembrane segments (helical) span residues 7–24 and 29–46; these read TMLLAFMTALFMGVGYLV and GMVVALFIAGGLNFFSYW. His130 provides a ligand contact to Zn(2+). Residue Glu131 is part of the active site. Position 134 (His134) interacts with Zn(2+). 2 helical membrane-spanning segments follow: residues 145–165 and 177–197; these read LTATIAGAISMLGNFALLMGM and GAGMLGTVIALFVAPFAAMLV. Glu206 lines the Zn(2+) pocket. The disordered stretch occupies residues 308 to 343; it reads NLEDEDLNPEAQNGFTHNQKKKTVRRGKDRPTWLRH. Positions 325–335 are enriched in basic residues; it reads NQKKKTVRRGK.

Belongs to the peptidase M48B family. It depends on Zn(2+) as a cofactor.

The protein localises to the cell inner membrane. The chain is Protease HtpX homolog from Bartonella bacilliformis (strain ATCC 35685 / KC583 / Herrer 020/F12,63).